Consider the following 55-residue polypeptide: Hydrophobic protein LTI6B (55 aa).

The next 2 membrane-spanning stretches (helical) occupy residues 8 to 28 (IDIL…FGCG) and 31 to 51 (FWIC…YAIY).

The protein belongs to the UPF0057 (PMP3) family.

The protein resides in the membrane. In terms of biological role, plays a role in the regulation of membrane potential. Could mediate a proton leak. The sequence is that of Hydrophobic protein LTI6B (LTI6B) from Oryza sativa subsp. indica (Rice).